The following is a 37-amino-acid chain: Potassium channel toxin alpha-KTx 11.1 (37 aa).

3 cysteine pairs are disulfide-bonded: cysteine 8-cysteine 27, cysteine 13-cysteine 33, and cysteine 17-cysteine 35.

Belongs to the short scorpion toxin superfamily. Potassium channel inhibitor family. Alpha-KTx 11 subfamily. As to expression, expressed by the venom gland.

It localises to the secreted. Its function is as follows. Binds and inhibits voltage-sensitive potassium channels. Inhibits the vertebrate potassium channels Kv1.1/KCNA1, Kv1.2/KCNA2 and Kv1.3/KCNA3 with low affinity. Also weakly inhibits Kv7.1/KCNQ1 (10 uM of the toxin inhibits currents by 21.43%). The polypeptide is Potassium channel toxin alpha-KTx 11.1 (Parabuthus villosus (Black hairy thick-tailed scorpion)).